Consider the following 151-residue polypeptide: Regulatory protein RecX (151 aa).

It belongs to the RecX family.

Its subcellular location is the cytoplasm. Functionally, modulates RecA activity. This Actinobacillus pleuropneumoniae serotype 5b (strain L20) protein is Regulatory protein RecX.